We begin with the raw amino-acid sequence, 266 residues long: Putative carbamate hydrolase RutD (266 aa).

It belongs to the AB hydrolase superfamily. Hydrolase RutD family.

It catalyses the reaction carbamate + 2 H(+) = NH4(+) + CO2. Its function is as follows. Involved in pyrimidine catabolism. May facilitate the hydrolysis of carbamate, a reaction that can also occur spontaneously. This Escherichia coli O139:H28 (strain E24377A / ETEC) protein is Putative carbamate hydrolase RutD.